A 65-amino-acid chain; its full sequence is Large ribosomal subunit protein bL31 (65 aa).

The Zn(2+) site is built by C16, C18, C36, and C39.

The protein belongs to the bacterial ribosomal protein bL31 family. Type A subfamily. Part of the 50S ribosomal subunit. Requires Zn(2+) as cofactor.

Functionally, binds the 23S rRNA. In Geotalea uraniireducens (strain Rf4) (Geobacter uraniireducens), this protein is Large ribosomal subunit protein bL31.